The chain runs to 328 residues: MERDNGTIQAPGLPPTTCVYREDFKRLLLPPVYSVVLVVGLPLNVCVIAQICASRRTLTRSAVYTLNLALADLLYACSLPLLIYNYARGDHWPFGDLACRLVRFLFYANLHGSILFLTCISFQRYLGICHPLAPWHKRGGRRAAWVVCGVVWLVVTAQCLPTAVFAATGIQRNRTVCYDLSPPILSTRYLPYGMALTVIGFLLPFTALLACYCRMARRLCRQDGPAGPVAQERRSKAARMAVVVAAVFVISFLPFHITKTAYLAVRSTPGVSCPVLETFAAAYKGTRPFASANSVLDPILFYFTQQKFRRQPHDLLQKLTAKWQRQRV.

Over 1–27 (MERDNGTIQAPGLPPTTCVYREDFKRL) the chain is Extracellular. Asparagine 5 carries N-linked (GlcNAc...) asparagine glycosylation. Residues 28-48 (LLPPVYSVVLVVGLPLNVCVI) traverse the membrane as a helical segment. At 49–62 (AQICASRRTLTRSA) the chain is on the cytoplasmic side. The helical transmembrane segment at 63-83 (VYTLNLALADLLYACSLPLLI) threads the bilayer. Residues 84–101 (YNYARGDHWPFGDLACRL) are Extracellular-facing. Cysteine 99 and cysteine 177 are joined by a disulfide. A helical transmembrane segment spans residues 102–122 (VRFLFYANLHGSILFLTCISF). Over 123 to 144 (QRYLGICHPLAPWHKRGGRRAA) the chain is Cytoplasmic. Residues 145-165 (WVVCGVVWLVVTAQCLPTAVF) traverse the membrane as a helical segment. At 166–194 (AATGIQRNRTVCYDLSPPILSTRYLPYGM) the chain is on the extracellular side. Asparagine 173 carries an N-linked (GlcNAc...) asparagine glycan. Residues 195 to 215 (ALTVIGFLLPFTALLACYCRM) traverse the membrane as a helical segment. The Cytoplasmic portion of the chain corresponds to 216-236 (ARRLCRQDGPAGPVAQERRSK). Residues 237–257 (AARMAVVVAAVFVISFLPFHI) traverse the membrane as a helical segment. Residues 258 to 280 (TKTAYLAVRSTPGVSCPVLETFA) lie on the Extracellular side of the membrane. Residues 281–303 (AAYKGTRPFASANSVLDPILFYF) traverse the membrane as a helical segment. The Cytoplasmic portion of the chain corresponds to 304–328 (TQQKFRRQPHDLLQKLTAKWQRQRV).

Belongs to the G-protein coupled receptor 1 family. Abundantly expressed in various tissues including lung, stomach, intestine, spleen, mesentery, heart, and, most prominently, aorta.

The protein localises to the cell membrane. Its function is as follows. Receptor for extracellular UTP &gt; ADP = 2-methylthio-ATP &gt; ADP-beta-S &gt; ATP = ATP-gamma-S. The activity of this receptor is mediated by G proteins which activate a phosphatidylinositol-calcium second messenger system. Functionally coupled to phospholipase C. The chain is P2Y purinoceptor 6 (P2ry6) from Rattus norvegicus (Rat).